The following is a 576-amino-acid chain: Proline--tRNA ligase (576 aa).

This sequence belongs to the class-II aminoacyl-tRNA synthetase family. ProS type 1 subfamily. In terms of assembly, homodimer.

It is found in the cytoplasm. The enzyme catalyses tRNA(Pro) + L-proline + ATP = L-prolyl-tRNA(Pro) + AMP + diphosphate. In terms of biological role, catalyzes the attachment of proline to tRNA(Pro) in a two-step reaction: proline is first activated by ATP to form Pro-AMP and then transferred to the acceptor end of tRNA(Pro). As ProRS can inadvertently accommodate and process non-cognate amino acids such as alanine and cysteine, to avoid such errors it has two additional distinct editing activities against alanine. One activity is designated as 'pretransfer' editing and involves the tRNA(Pro)-independent hydrolysis of activated Ala-AMP. The other activity is designated 'posttransfer' editing and involves deacylation of mischarged Ala-tRNA(Pro). The misacylated Cys-tRNA(Pro) is not edited by ProRS. This is Proline--tRNA ligase from Bordetella petrii (strain ATCC BAA-461 / DSM 12804 / CCUG 43448).